We begin with the raw amino-acid sequence, 342 residues long: Thioredoxin reductase 2, mitochondrial (342 aa).

A mitochondrion-targeting transit peptide spans 1-23 (MIKHIVSPFRTNFVGISKSVLSR). FAD is bound by residues 34-37 (SGPA), 56-68 (EGMM…AGGQ), 63-64 (IA), Q68, N77, V110, C168, D311, 311-320 (DVQDSRYRQA), and 318-320 (RQA). A disulfide bridge connects residues C165 and C168.

Belongs to the class-II pyridine nucleotide-disulfide oxidoreductase family. Homodimer. It depends on FAD as a cofactor.

The protein localises to the mitochondrion. It carries out the reaction [thioredoxin]-dithiol + NADP(+) = [thioredoxin]-disulfide + NADPH + H(+). Its function is as follows. Acts on mitochondrial thioredoxin 3. Implicated in the defense against oxidative stress. The protein is Thioredoxin reductase 2, mitochondrial of Saccharomyces cerevisiae (strain ATCC 204508 / S288c) (Baker's yeast).